The primary structure comprises 393 residues: CCA-adding enzyme (393 aa).

Positions 27 and 30 each coordinate ATP. Positions 27 and 30 each coordinate CTP. Residues Asp-40 and Asp-42 each contribute to the Mg(2+) site. The ATP site is built by Arg-111, Asp-154, Arg-157, Arg-160, and Arg-163. CTP contacts are provided by Arg-111, Asp-154, Arg-157, Arg-160, and Arg-163.

It belongs to the tRNA nucleotidyltransferase/poly(A) polymerase family. Bacterial CCA-adding enzyme type 3 subfamily. As to quaternary structure, homodimer. Requires Mg(2+) as cofactor.

It catalyses the reaction a tRNA precursor + 2 CTP + ATP = a tRNA with a 3' CCA end + 3 diphosphate. It carries out the reaction a tRNA with a 3' CCA end + 2 CTP + ATP = a tRNA with a 3' CCACCA end + 3 diphosphate. In terms of biological role, catalyzes the addition and repair of the essential 3'-terminal CCA sequence in tRNAs without using a nucleic acid template. Adds these three nucleotides in the order of C, C, and A to the tRNA nucleotide-73, using CTP and ATP as substrates and producing inorganic pyrophosphate. tRNA 3'-terminal CCA addition is required both for tRNA processing and repair. Also involved in tRNA surveillance by mediating tandem CCA addition to generate a CCACCA at the 3' terminus of unstable tRNAs. While stable tRNAs receive only 3'-terminal CCA, unstable tRNAs are marked with CCACCA and rapidly degraded. The protein is CCA-adding enzyme of Listeria monocytogenes serotype 4b (strain CLIP80459).